We begin with the raw amino-acid sequence, 384 residues long: MAP kinase-activated protein kinase 3 (384 aa).

Position 1 is an N-acetylmethionine (M1). The tract at residues 1-22 (MDVETAEEQGGPAPPSGVPCGP) is disordered. The Protein kinase domain occupies 46–306 (QLSKQVLGLG…ITQFMNHPWI (261 aa)). Residues 52–60 (LGLGVNGKV) and K75 each bind ATP. Catalysis depends on D168, which acts as the Proton acceptor. T203 carries the phosphothreonine; by MAPK14 modification. Position 253 is a phosphoserine; by MAPK14 (S253). Residue S309 is modified to Phosphoserine; by autocatalysis. Residues 309–345 (SMVVPQTPLHTARVLQEDRDHWDEVKEEMTSALATMR) form an autoinhibitory helix region. A Phosphothreonine; by MAPK14 modification is found at T315. The Nuclear export signal (NES) signature appears at 337–346 (MTSALATMRV). A p38 MAPK-binding site region spans residues 347 to 371 (DYDQVKIKDLKTSNNRLLNKRRKKQ). 2 consecutive short sequence motifs (bipartite nuclear localization signal) follow at residues 352 to 355 (KIKD) and 366 to 370 (KRRKK). Positions 359 to 384 (SNNRLLNKRRKKQAGSSSGSQGCNNQ) are disordered. Residues 373–384 (GSSSGSQGCNNQ) show a composition bias toward low complexity.

It belongs to the protein kinase superfamily. CAMK Ser/Thr protein kinase family. Heterodimer with p38-alpha/MAPK14. The heterodimer with p38-alpha/MAPK14 forms a stable complex: molecules are positioned 'face to face' so that the ATP-binding sites of both kinases are at the heterodimer interface. Interacts with TCF3 and with polycomb proteins, such as PCH2 and BMI1/PCGF4. In terms of processing, phosphorylated and activated by MAPK1/ERK2 and MAPK3/ERK1. Phosphorylated and activated by MAP kinase p38-alpha/MAPK14 at Thr-203, Ser-253 and Thr-315.

It localises to the nucleus. The protein resides in the cytoplasm. It catalyses the reaction L-seryl-[protein] + ATP = O-phospho-L-seryl-[protein] + ADP + H(+). It carries out the reaction L-threonyl-[protein] + ATP = O-phospho-L-threonyl-[protein] + ADP + H(+). Its activity is regulated as follows. Activated following phosphorylation by p38-alpha/MAPK14 following various stresses. Inhibited by ligand 5B (2'-[2-(1,3-benzodioxol-5-yl)pyrimidin-4-yl]-5',6'-dihydrospiro[piperidine-4,7'-pyrrolo[3,2-c]pyridin]- 4'(1'h)-one) and ligand P4O (2-[2-(2-fluorophenyl)pyridin-4-yl]-1,5,6,7-tetrahydro- 4h-pyrrolo[3,2-c]pyridin-4-one), 2 ATP-competitive inhibitors. Its function is as follows. Stress-activated serine/threonine-protein kinase involved in cytokines production, endocytosis, cell migration, chromatin remodeling and transcriptional regulation. Following stress, it is phosphorylated and activated by MAP kinase p38-alpha/MAPK14, leading to phosphorylation of substrates. Phosphorylates serine in the peptide sequence, Hyd-X-R-X(2)-S, where Hyd is a large hydrophobic residue. MAPKAPK2 and MAPKAPK3, share the same function and substrate specificity, but MAPKAPK3 kinase activity and level in protein expression are lower compared to MAPKAPK2. Phosphorylates HSP27/HSPB1, KRT18, KRT20, RCSD1, RPS6KA3, TAB3 and TTP/ZFP36. Mediates phosphorylation of HSP27/HSPB1 in response to stress, leading to dissociate HSP27/HSPB1 from large small heat-shock protein (sHsps) oligomers and impair their chaperone activities and ability to protect against oxidative stress effectively. Involved in inflammatory response by regulating tumor necrosis factor (TNF) and IL6 production post-transcriptionally: acts by phosphorylating AU-rich elements (AREs)-binding proteins, such as TTP/ZFP36, leading to regulate the stability and translation of TNF and IL6 mRNAs. Phosphorylation of TTP/ZFP36, a major post-transcriptional regulator of TNF, promotes its binding to 14-3-3 proteins and reduces its ARE mRNA affinity leading to inhibition of dependent degradation of ARE-containing transcript. Involved in toll-like receptor signaling pathway (TLR) in dendritic cells: required for acute TLR-induced macropinocytosis by phosphorylating and activating RPS6KA3. Also acts as a modulator of Polycomb-mediated repression. The sequence is that of MAP kinase-activated protein kinase 3 (MAPKAPK3) from Bos taurus (Bovine).